A 436-amino-acid chain; its full sequence is Ribosomal protein uS12 methylthiotransferase RimO (436 aa).

The 116-residue stretch at 2–117 (KNVGIISLGC…IAEVIEKIEK (116 aa)) folds into the MTTase N-terminal domain. 6 residues coordinate [4Fe-4S] cluster: C11, C47, C80, C154, C158, and C161. A Radical SAM core domain is found at 140 to 369 (TTPNYYAYLK…MEIQKEISYQ (230 aa)). The TRAM domain maps to 372–436 (LSKVGKQLEV…AYEYDLVGEY (65 aa)).

It belongs to the methylthiotransferase family. RimO subfamily. [4Fe-4S] cluster serves as cofactor.

The protein resides in the cytoplasm. The enzyme catalyses L-aspartate(89)-[ribosomal protein uS12]-hydrogen + (sulfur carrier)-SH + AH2 + 2 S-adenosyl-L-methionine = 3-methylsulfanyl-L-aspartate(89)-[ribosomal protein uS12]-hydrogen + (sulfur carrier)-H + 5'-deoxyadenosine + L-methionine + A + S-adenosyl-L-homocysteine + 2 H(+). Functionally, catalyzes the methylthiolation of an aspartic acid residue of ribosomal protein uS12. The chain is Ribosomal protein uS12 methylthiotransferase RimO from Thermoanaerobacter sp. (strain X514).